We begin with the raw amino-acid sequence, 195 residues long: FK506-binding protein 2 (195 aa).

Positions 1–19 (MKAALFLSALASTAVGVVA) are cleaved as a signal peptide. The 89-residue stretch at 39–127 (GDGVHMHYRG…VFETELVGID (89 aa)) folds into the PPIase FKBP-type domain. A Prevents secretion from ER motif is present at residues 192-195 (HEEL).

Belongs to the FKBP-type PPIase family. FKBP2 subfamily.

Its subcellular location is the endoplasmic reticulum. The catalysed reaction is [protein]-peptidylproline (omega=180) = [protein]-peptidylproline (omega=0). Inhibited by both FK506 and rapamycin. PPIases accelerate the folding of proteins. It catalyzes the cis-trans isomerization of proline imidic peptide bonds in oligopeptides. This is FK506-binding protein 2 (FPR2) from Gibberella zeae (strain ATCC MYA-4620 / CBS 123657 / FGSC 9075 / NRRL 31084 / PH-1) (Wheat head blight fungus).